A 284-amino-acid chain; its full sequence is L-ribulose-5-phosphate 3-epimerase UlaE (284 aa).

The protein belongs to the L-ribulose-5-phosphate 3-epimerase family.

It catalyses the reaction L-ribulose 5-phosphate = L-xylulose 5-phosphate. Its pathway is cofactor degradation; L-ascorbate degradation; D-xylulose 5-phosphate from L-ascorbate: step 3/4. Catalyzes the isomerization of L-xylulose-5-phosphate to L-ribulose-5-phosphate. Is involved in the anaerobic L-ascorbate utilization. The polypeptide is L-ribulose-5-phosphate 3-epimerase UlaE (Salmonella heidelberg (strain SL476)).